The following is a 112-amino-acid chain: Ig kappa chain V-II region MOPC 167 (112 aa).

The tract at residues 1–23 (DIVITQDELSNPVTSGESVSISC) is framework-1. Cysteine 23 and cysteine 93 are disulfide-bonded. The complementarity-determining-1 stretch occupies residues 24 to 39 (RSSKSLLYKDGKTYLN). The interval 40–54 (WFLQRPGQSPQLLIS) is framework-2. The tract at residues 55–61 (LMSTRAS) is complementarity-determining-2. The interval 62 to 93 (GVSDRFSGSGSRTDFTLEISRVKAEDVGVYYC) is framework-3. A complementarity-determining-3 region spans residues 94–102 (QQLVEYPLT). The segment at 103–112 (FGAGTKLELK) is framework-4.

The chain is Ig kappa chain V-II region MOPC 167 from Mus musculus (Mouse).